We begin with the raw amino-acid sequence, 234 residues long: Peptidase E (234 aa).

Catalysis depends on charge relay system residues Ser123, Asp138, and His160.

This sequence belongs to the peptidase S51 family.

The protein resides in the cytoplasm. It catalyses the reaction Dipeptidase E catalyzes the hydrolysis of dipeptides Asp-|-Xaa. It does not act on peptides with N-terminal Glu, Asn or Gln, nor does it cleave isoaspartyl peptides.. In terms of biological role, hydrolyzes dipeptides containing N-terminal aspartate residues. May play a role in allowing the cell to use peptide aspartate to spare carbon otherwise required for the synthesis of the aspartate family of amino acids. This Haemophilus influenzae (strain PittGG) protein is Peptidase E.